Reading from the N-terminus, the 380-residue chain is Cytochrome b (380 aa).

4 helical membrane-spanning segments follow: residues 34-54 (FGSL…LLAM), 78-99 (WLIR…YLHI), 114-134 (WNTG…GYVL), and 179-199 (FFAL…IHLT). Heme b-binding residues include histidine 84 and histidine 98. Heme b is bound by residues histidine 183 and histidine 197. Histidine 202 provides a ligand contact to a ubiquinone. The next 4 helical transmembrane spans lie at 227-247 (LKDI…ALFS), 289-309 (LGGV…PFLH), 321-341 (LSQL…WVGS), and 348-368 (FIII…ILFP).

It belongs to the cytochrome b family. As to quaternary structure, the cytochrome bc1 complex contains 11 subunits: 3 respiratory subunits (MT-CYB, CYC1 and UQCRFS1), 2 core proteins (UQCRC1 and UQCRC2) and 6 low-molecular weight proteins (UQCRH/QCR6, UQCRB/QCR7, UQCRQ/QCR8, UQCR10/QCR9, UQCR11/QCR10 and a cleavage product of UQCRFS1). This cytochrome bc1 complex then forms a dimer. Heme b serves as cofactor.

It is found in the mitochondrion inner membrane. In terms of biological role, component of the ubiquinol-cytochrome c reductase complex (complex III or cytochrome b-c1 complex) that is part of the mitochondrial respiratory chain. The b-c1 complex mediates electron transfer from ubiquinol to cytochrome c. Contributes to the generation of a proton gradient across the mitochondrial membrane that is then used for ATP synthesis. In Daption capense (Cape petrel), this protein is Cytochrome b (MT-CYB).